Reading from the N-terminus, the 189-residue chain is Protein GrpE (189 aa).

Positions Met-1–Glu-37 are disordered. Over residues Ser-17–Asp-33 the composition is skewed to basic and acidic residues.

This sequence belongs to the GrpE family. Homodimer.

The protein localises to the cytoplasm. Participates actively in the response to hyperosmotic and heat shock by preventing the aggregation of stress-denatured proteins, in association with DnaK and GrpE. It is the nucleotide exchange factor for DnaK and may function as a thermosensor. Unfolded proteins bind initially to DnaJ; upon interaction with the DnaJ-bound protein, DnaK hydrolyzes its bound ATP, resulting in the formation of a stable complex. GrpE releases ADP from DnaK; ATP binding to DnaK triggers the release of the substrate protein, thus completing the reaction cycle. Several rounds of ATP-dependent interactions between DnaJ, DnaK and GrpE are required for fully efficient folding. In Wolbachia sp. subsp. Drosophila simulans (strain wRi), this protein is Protein GrpE.